The chain runs to 339 residues: ADP-L-glycero-D-manno-heptose-6-epimerase (339 aa).

Residues 11 to 12, 32 to 33, Lys39, Lys54, 75 to 79, and Asn92 contribute to the NADP(+) site; these read FI, DD, and EGACS. Tyr139 serves as the catalytic Proton acceptor. Lys143 contacts NADP(+). Asn170 contributes to the substrate binding site. Residues Val171 and Lys179 each contribute to the NADP(+) site. Lys179 serves as the catalytic Proton acceptor. Substrate-binding positions include Arg181, His188, 202–205, Arg215, and Tyr294; that span reads FGEY.

Belongs to the NAD(P)-dependent epimerase/dehydratase family. HldD subfamily. In terms of assembly, homopentamer. NADP(+) is required as a cofactor.

The catalysed reaction is ADP-D-glycero-beta-D-manno-heptose = ADP-L-glycero-beta-D-manno-heptose. It functions in the pathway nucleotide-sugar biosynthesis; ADP-L-glycero-beta-D-manno-heptose biosynthesis; ADP-L-glycero-beta-D-manno-heptose from D-glycero-beta-D-manno-heptose 7-phosphate: step 4/4. Catalyzes the interconversion between ADP-D-glycero-beta-D-manno-heptose and ADP-L-glycero-beta-D-manno-heptose via an epimerization at carbon 6 of the heptose. The polypeptide is ADP-L-glycero-D-manno-heptose-6-epimerase (Polynucleobacter necessarius subsp. necessarius (strain STIR1)).